The sequence spans 439 residues: Xylose isomerase (439 aa).

Active-site residues include His-101 and Asp-104. Positions 232, 268, 271, 296, 307, 309, and 339 each coordinate Mg(2+).

It belongs to the xylose isomerase family. Homotetramer. Requires Mg(2+) as cofactor.

The protein localises to the cytoplasm. It carries out the reaction alpha-D-xylose = alpha-D-xylulofuranose. This chain is Xylose isomerase, found in Photorhabdus laumondii subsp. laumondii (strain DSM 15139 / CIP 105565 / TT01) (Photorhabdus luminescens subsp. laumondii).